Reading from the N-terminus, the 402-residue chain is MAQDRKKVLVLGAGYAGLQTVTKLQKTISTEEAEITLINKNEYHYEATWLHEASAGTLNYEDVLYPVESVLKKDKVNFVQAEVTKIDRDAKKVETNQGIYDFDILVVALGFVSETFGIEGMKDHAFQIENVITARELSRHIEDKFANYAASKEKDDNDLSILVGGAGFTGVEFLGELTDRIPELCSKYGVDQNKVKITCVEAAPKMLPMFSEELVNHAVSYLEDRGVEFKIATPIVACNEKGFVVEVDGEKQQLNAGTSVWAAGVRGSKLMEESFEGVKRGRIVTKQDLTINGYDNIFVIGDCSAFIPAGEERPLPTTAQIAMQQGESVAKNIKRILNGESTEEFEYVDRGTVCSLGSHDGVGMVFGKPIAGKKAAFMKKVIDTRAVFKIGGIGLAFKKGKF.

Residues 12-16 (GAGYA), 39-40 (NK), and V83 contribute to the FAD site. E172 is a catalytic residue. FAD contacts are provided by residues D302, 319 to 320 (AQ), and K379.

Belongs to the NADH dehydrogenase family. Requires FAD as cofactor.

The protein localises to the cell membrane. The enzyme catalyses a quinone + NADH + H(+) = a quinol + NAD(+). Alternative, nonproton pumping NADH:quinone oxidoreductase that delivers electrons to the respiratory chain by oxidation of NADH and reduction of quinones, and contributes to the regeneration of NAD(+). In Staphylococcus aureus (strain bovine RF122 / ET3-1), this protein is Type II NADH:quinone oxidoreductase.